The sequence spans 461 residues: Bifunctional protein GlmU (461 aa).

The tract at residues 1–230 (MECLMAVILA…SSEILGINDR (230 aa)) is pyrophosphorylase. Residues 9–12 (LAAG), Lys-23, Gln-73, 78–79 (GT), 101–103 (YGD), Gly-140, Glu-155, Asn-170, and Asn-228 each bind UDP-N-acetyl-alpha-D-glucosamine. A Mg(2+)-binding site is contributed by Asp-103. Asn-228 serves as a coordination point for Mg(2+). The tract at residues 231–251 (VQLAEAGRIIRSRILKRHMKN) is linker. The interval 252-461 (GVTIIDPDST…KKGMLRQEKE (210 aa)) is N-acetyltransferase. UDP-N-acetyl-alpha-D-glucosamine contacts are provided by Arg-333 and Lys-351. Residue His-363 is the Proton acceptor of the active site. Residues Tyr-366 and Asn-377 each coordinate UDP-N-acetyl-alpha-D-glucosamine. Acetyl-CoA contacts are provided by residues 386–387 (NY), Ala-423, and Arg-440.

In the N-terminal section; belongs to the N-acetylglucosamine-1-phosphate uridyltransferase family. It in the C-terminal section; belongs to the transferase hexapeptide repeat family. In terms of assembly, homotrimer. Requires Mg(2+) as cofactor.

It localises to the cytoplasm. The catalysed reaction is alpha-D-glucosamine 1-phosphate + acetyl-CoA = N-acetyl-alpha-D-glucosamine 1-phosphate + CoA + H(+). The enzyme catalyses N-acetyl-alpha-D-glucosamine 1-phosphate + UTP + H(+) = UDP-N-acetyl-alpha-D-glucosamine + diphosphate. The protein operates within nucleotide-sugar biosynthesis; UDP-N-acetyl-alpha-D-glucosamine biosynthesis; N-acetyl-alpha-D-glucosamine 1-phosphate from alpha-D-glucosamine 6-phosphate (route II): step 2/2. Its pathway is nucleotide-sugar biosynthesis; UDP-N-acetyl-alpha-D-glucosamine biosynthesis; UDP-N-acetyl-alpha-D-glucosamine from N-acetyl-alpha-D-glucosamine 1-phosphate: step 1/1. It functions in the pathway bacterial outer membrane biogenesis; LPS lipid A biosynthesis. In terms of biological role, catalyzes the last two sequential reactions in the de novo biosynthetic pathway for UDP-N-acetylglucosamine (UDP-GlcNAc). The C-terminal domain catalyzes the transfer of acetyl group from acetyl coenzyme A to glucosamine-1-phosphate (GlcN-1-P) to produce N-acetylglucosamine-1-phosphate (GlcNAc-1-P), which is converted into UDP-GlcNAc by the transfer of uridine 5-monophosphate (from uridine 5-triphosphate), a reaction catalyzed by the N-terminal domain. This chain is Bifunctional protein GlmU, found in Acetivibrio thermocellus (strain ATCC 27405 / DSM 1237 / JCM 9322 / NBRC 103400 / NCIMB 10682 / NRRL B-4536 / VPI 7372) (Clostridium thermocellum).